The primary structure comprises 318 residues: Esterase FVEG_12639 (318 aa).

Active-site residues include Ser-156, Asp-255, and His-285.

The protein belongs to the AB hydrolase 3 family.

In terms of biological role, esterase; part of the Fusarium detoxification of benzoxazolinone cluster 2 (FDB2) involved in the degradation of benzoxazolinones produced by the host plant. Maize, wheat, and rye produce the 2 benzoxazinone phytoanticipins 2,4-dihy-droxy-7-methoxy-1,4-benzoxazin-3-one (DIMBOA) and 2,4-dihydroxy-1,4-benzoxazin-3-one (DIBOA) that, due to their inherent instability once released, spontaneously degrade to the more stable corresponding benzoxazolinones, 6-methoxy-2-benzoxazolinone (MBOA) and 2-benzoxazolinone (BOA), respectively. The first step in the detoxification of benzoxazolinones involves the hydrolysis of the cyclic ester bond of benzoxazolinones by the FDB1 cluster gamma-lactamase MBL1 to aminophenols. MBL1 is able to convert BOA into 2-aminophenol (2-AP), as well as MBOA into 5-methoxy-2-aminophenol (2-AMP). The FDB2 cluster N-malonyltransferase FDB2/NAT1 then metabolizes aminophenols via N-malonylation to non-toxic malonamic acids. FDB2/NAT1 converts 2-AP into N-(2-hydroxyphenyl) malonamic acid (HPMA) and 2-AMP into N-(2-hydroxy-4-methoxyphenyl) malonamic acid (HMPMA). The duplicated dienlactone hydrolases DLH1 and DLH2 may provide redundant function for hydrolyzing the lactone moiety in the BOA molecule. The roles of the amidases an other enzymes encoded by the 2 FDB clusters have not been identified so far. The sequence is that of Esterase FVEG_12639 from Gibberella moniliformis (strain M3125 / FGSC 7600) (Maize ear and stalk rot fungus).